Here is an 83-residue protein sequence, read N- to C-terminus: Mitochondrial import inner membrane translocase subunit Tim8 B (83 aa).

Alanine 2 carries the N-acetylalanine modification. Positions cysteine 36–cysteine 59 match the Twin CX3C motif motif. Disulfide bonds link cysteine 36/cysteine 59 and cysteine 40/cysteine 55.

Belongs to the small Tim family. In terms of assembly, heterohexamer; possibly composed of 3 copies of TIMM8B and 3 copies of TIMM13, named soluble 70 kDa complex. Associates with the TIM22 complex, whose core is composed of TIMM22.

It is found in the mitochondrion inner membrane. Probable mitochondrial intermembrane chaperone that participates in the import and insertion of some multi-pass transmembrane proteins into the mitochondrial inner membrane. Also required for the transfer of beta-barrel precursors from the TOM complex to the sorting and assembly machinery (SAM complex) of the outer membrane. Acts as a chaperone-like protein that protects the hydrophobic precursors from aggregation and guide them through the mitochondrial intermembrane space. This Bos taurus (Bovine) protein is Mitochondrial import inner membrane translocase subunit Tim8 B (TIMM8B).